The following is a 1061-amino-acid chain: Bifunctional cytochrome P450/NADPH--P450 reductase 1 (1061 aa).

A cytochrome P450 region spans residues 1–475 (MKETSPIPQP…AEKAAPDEQK (475 aa)). Residue Cys-403 coordinates heme. Positions 476-1061 (EKTEAKGASV…MYAKDVWAGI (586 aa)) are NADPH--P450 reductase. In terms of domain architecture, Flavodoxin-like spans 493–632 (LLVLYGSDTG…QLDEWKKSMW (140 aa)). FMN-binding positions include 499–504 (SDTGTA), 546–549 (SYNG), 580–582 (CGD), and 588–590 (TYQ). Residues 671-904 (YEASHASIAE…RTPESRFQLP (234 aa)) form the FAD-binding FR-type domain.

In the N-terminal section; belongs to the cytochrome P450 family. Requires FAD as cofactor. It depends on FMN as a cofactor. Heme b is required as a cofactor.

The protein localises to the cytoplasm. The catalysed reaction is an organic molecule + reduced [NADPH--hemoprotein reductase] + O2 = an alcohol + oxidized [NADPH--hemoprotein reductase] + H2O + H(+). It catalyses the reaction 2 oxidized [cytochrome P450] + NADPH = 2 reduced [cytochrome P450] + NADP(+) + H(+). Functionally, functions as a fatty acid monooxygenase. Catalyzes hydroxylation of a range of long-chain fatty acids, with a preference for long-chain unsaturated and branched-chain fatty acids over saturated fatty acids. Hydroxylation of myristic acid occurs mainly at the omega-2 position. Also displays a NADPH-dependent reductase activity in the C-terminal domain, which allows electron transfer from NADPH to the heme iron of the cytochrome P450 N-terminal domain. Is also able to catalyze efficient oxidation of sodium dodecyl sulfate (SDS). This Bacillus subtilis (strain 168) protein is Bifunctional cytochrome P450/NADPH--P450 reductase 1.